The chain runs to 428 residues: Dihydroorotase (428 aa).

The Zn(2+) site is built by His60 and His62. Substrate is bound by residues 62–64 (HLR) and Asn94. Asp152, His179, and His232 together coordinate Zn(2+). Residue Asn278 participates in substrate binding. Zn(2+) is bound at residue Asp305. Asp305 is a catalytic residue. Substrate is bound by residues His309 and 323 to 324 (FG).

Belongs to the metallo-dependent hydrolases superfamily. DHOase family. Class I DHOase subfamily. Zn(2+) is required as a cofactor.

It carries out the reaction (S)-dihydroorotate + H2O = N-carbamoyl-L-aspartate + H(+). The protein operates within pyrimidine metabolism; UMP biosynthesis via de novo pathway; (S)-dihydroorotate from bicarbonate: step 3/3. Its function is as follows. Catalyzes the reversible cyclization of carbamoyl aspartate to dihydroorotate. The polypeptide is Dihydroorotase (Anoxybacillus flavithermus (strain DSM 21510 / WK1)).